Consider the following 350-residue polypeptide: uncharacterized protein (350 aa).

A run of 3 helical transmembrane segments spans residues 10–30, 51–71, and 327–347; these read YSFI…EVIG, FAGI…VTLT, and ILSL…LKLF.

It belongs to the 1-acyl-sn-glycerol-3-phosphate acyltransferase family.

Its subcellular location is the endoplasmic reticulum membrane. This is an uncharacterized protein from Schizosaccharomyces pombe (strain 972 / ATCC 24843) (Fission yeast).